A 673-amino-acid polypeptide reads, in one-letter code: MANEEFTRHYAWPVPVASNDEGRGTARIPIQAQSIVAGEDGRDTSVPTALSRPPIEDMPHGVQETSASGGRLGAARLRDSVIPPGISEARTDLSAILRKKSGSFRTGMQYLRGLERENFDKQDREASALPDLSARGIKRPREIEYPGNASGLTIKRQDGLGIEINTISASSPVNRAAHSSNWQGAPEPGVYNVQPSADRAQNSAQESSTFPDGTSVSALYSGPLAEWFERDTGSETTRNSGNTISSPLRGLEEFGDSADSRYLGREAQSLSVTVTTPNSNAEASSHSAHTETLDDVSSDRSSEQGRGPLGAAILGSHHDLSPRAQKLSQTNRDSPELTDADLAKVDAVFESLSKGPPAGESAAPDFRERGPGSAFQKEGVSDRANGVPTNWEVPFGRGGGHSPQALRSSGVELDDFPDFTEAELAKIDALVESHSNRSLSVRNIVPDLRGAGADNVFRKEGVVERAEKMPIDSVSLTRLNGERSRSPKTSQASLEDFPDLTDADLAHIEESERIARTAVEKGKQKISTEADTRFDLGNSSAPRVSPRSVTPLVPNANQPITSWFYEAQKTCDKLVENTYVKPAVDSSRARNDVENTAARLGDPAPALGHDNLGRTRALTPVRDVMSRPSADRQLASHAAEHSAIDDIWKRDDRDRRTHPYRGLDSRSREGCGR.

Disordered regions lie at residues 36–73 (VAGE…GRLG), 171–216 (SPVN…GTSV), 229–409 (ERDT…LRSS), 478–497 (RLNG…LEDF), 520–552 (EKGK…VTPL), and 585–673 (DSSR…GCGR). Polar residues-rich tracts occupy residues 171–183 (SPVN…SNWQ), 193–216 (VQPS…GTSV), 234–246 (SETT…TISS), and 268–277 (QSLSVTVTTP). The span at 278–287 (NSNAEASSHS) shows a compositional bias: low complexity. Basic and acidic residues predominate over residues 288–303 (AHTETLDDVSSDRSSE). Composition is skewed to basic and acidic residues over residues 520–534 (EKGK…DTRF) and 638–673 (AAEH…GCGR).

The chain is Protein VirD3 (virD3) from Agrobacterium fabrum (strain C58 / ATCC 33970) (Agrobacterium tumefaciens (strain C58)).